The sequence spans 205 residues: Delta-aminolevulinic acid dehydratase (205 aa).

Zn(2+) is bound by residues C117, C119, and C127. The active-site Schiff-base intermediate with substrate is K192. R202 provides a ligand contact to substrate.

The protein belongs to the ALAD family. Homooctamer. The cofactor is Zn(2+).

The catalysed reaction is 2 5-aminolevulinate = porphobilinogen + 2 H2O + H(+). The protein operates within porphyrin-containing compound metabolism; protoporphyrin-IX biosynthesis; coproporphyrinogen-III from 5-aminolevulinate: step 1/4. In terms of biological role, catalyzes an early step in the biosynthesis of tetrapyrroles. Binds two molecules of 5-aminolevulinate per subunit, each at a distinct site, and catalyzes their condensation to form porphobilinogen. The sequence is that of Delta-aminolevulinic acid dehydratase (hemB) from Ruminiclostridium josui (Clostridium josui).